Here is a 741-residue protein sequence, read N- to C-terminus: Catalase-peroxidase 2 (741 aa).

The first 28 residues, 1–28, serve as a signal peptide directing secretion; the sequence is MQKKRIGKSVVAALAIIAMSAGTVAAWA. The segment at residues 107 to 228 is a cross-link (tryptophyl-tyrosyl-methioninium (Trp-Tyr) (with M-254)); sequence WHGAGTYRTY…LAATQMGLIY (122 aa). H108 acts as the Proton acceptor in catalysis. The segment at residues 228-254 is a cross-link (tryptophyl-tyrosyl-methioninium (Tyr-Met) (with W-107)); that stretch reads YVNPEGPNGNPDPVAAAKDIREAFGRM. A heme b-binding site is contributed by H269.

The protein belongs to the peroxidase family. Peroxidase/catalase subfamily. Homodimer or homotetramer. Heme b is required as a cofactor. In terms of processing, formation of the three residue Trp-Tyr-Met cross-link is important for the catalase, but not the peroxidase activity of the enzyme.

The enzyme catalyses H2O2 + AH2 = A + 2 H2O. The catalysed reaction is 2 H2O2 = O2 + 2 H2O. In terms of biological role, bifunctional enzyme with both catalase and broad-spectrum peroxidase activity. This Burkholderia ambifaria (strain MC40-6) protein is Catalase-peroxidase 2.